The sequence spans 380 residues: Chaperone protein DnaJ (380 aa).

Residues 5 to 70 form the J domain; that stretch reads DYYEILGVAK…QKRAAYDQYG (66 aa). The segment at 135-213 adopts a CR-type zinc-finger fold; it reads GVSKEIRIPT…CHGHGRVEKS (79 aa). 8 residues coordinate Zn(2+): cysteine 148, cysteine 151, cysteine 165, cysteine 168, cysteine 187, cysteine 190, cysteine 201, and cysteine 204. CXXCXGXG motif repeat units follow at residues 148-155, 165-172, 187-194, and 201-208; these read CGVCHGSG, CSTCHGAG, CPTCHGRG, and CNACHGHG.

Belongs to the DnaJ family. As to quaternary structure, homodimer. It depends on Zn(2+) as a cofactor.

It localises to the cytoplasm. Functionally, participates actively in the response to hyperosmotic and heat shock by preventing the aggregation of stress-denatured proteins and by disaggregating proteins, also in an autonomous, DnaK-independent fashion. Unfolded proteins bind initially to DnaJ; upon interaction with the DnaJ-bound protein, DnaK hydrolyzes its bound ATP, resulting in the formation of a stable complex. GrpE releases ADP from DnaK; ATP binding to DnaK triggers the release of the substrate protein, thus completing the reaction cycle. Several rounds of ATP-dependent interactions between DnaJ, DnaK and GrpE are required for fully efficient folding. Also involved, together with DnaK and GrpE, in the DNA replication of plasmids through activation of initiation proteins. This is Chaperone protein DnaJ from Erwinia tasmaniensis (strain DSM 17950 / CFBP 7177 / CIP 109463 / NCPPB 4357 / Et1/99).